The chain runs to 202 residues: Vacuolar protein-sorting-associated protein 25 (202 aa).

The protein belongs to the VPS25 family. As to quaternary structure, homodimer. Component of the endosomal sorting complex required for transport II (ESCRT-II), which consists of 2 copies of VPS25, 1 copy of SNF8, and 1 copy of VPS36. The ESCRT-II complex interacts directly with the VPS20 subunit of the ESCRT-III complex.

It localises to the cytoplasm. The protein resides in the endosome membrane. In terms of biological role, component of the ESCRT-II complex (endosomal sorting complex required for transport II), which is required for multivesicular body (MVB) formation and sorting of endosomal cargo proteins into MVBs. The MVB pathway mediates delivery of transmembrane proteins into the lumen of the lysosome for degradation. The ESCRT-II complex is probably involved in the recruitment of the ESCRT-III complex. The protein is Vacuolar protein-sorting-associated protein 25 (VPS25) of Saccharomyces cerevisiae (strain ATCC 204508 / S288c) (Baker's yeast).